The following is a 136-amino-acid chain: MGKDTIADLLTSIRNADMNKKGTVRVVSTNITENIVKILLREGFLESVRKHQERNRYFLVSTLRHQKRKTRKGIYRTRTFLKRISRPGLRIYTNYQGIPKVLGGMGIAILSTSRGIMTDREARLNRIGGEVLCYIW.

Belongs to the universal ribosomal protein uS8 family. Part of the 30S ribosomal subunit.

The protein localises to the plastid. The protein resides in the chloroplast. In terms of biological role, one of the primary rRNA binding proteins, it binds directly to 16S rRNA central domain where it helps coordinate assembly of the platform of the 30S subunit. The sequence is that of Small ribosomal subunit protein uS8c (rps8) from Hordeum vulgare (Barley).